The chain runs to 454 residues: UDP-N-acetylmuramoylalanine--D-glutamate ligase (454 aa).

114 to 120 contributes to the ATP binding site; that stretch reads GTNGKTT.

Belongs to the MurCDEF family.

The protein resides in the cytoplasm. The catalysed reaction is UDP-N-acetyl-alpha-D-muramoyl-L-alanine + D-glutamate + ATP = UDP-N-acetyl-alpha-D-muramoyl-L-alanyl-D-glutamate + ADP + phosphate + H(+). It participates in cell wall biogenesis; peptidoglycan biosynthesis. Its function is as follows. Cell wall formation. Catalyzes the addition of glutamate to the nucleotide precursor UDP-N-acetylmuramoyl-L-alanine (UMA). This Desulfitobacterium hafniense (strain Y51) protein is UDP-N-acetylmuramoylalanine--D-glutamate ligase.